A 460-amino-acid polypeptide reads, in one-letter code: Bifunctional protein GlmU (460 aa).

A pyrophosphorylase region spans residues 1–229; the sequence is MTNYAIILAA…FNESLGVNDR (229 aa). Residues 8-11, K22, Q72, and 77-78 contribute to the UDP-N-acetyl-alpha-D-glucosamine site; these read LAAG and GT. Mg(2+) is bound at residue D102. UDP-N-acetyl-alpha-D-glucosamine-binding residues include G139, E154, N169, and N227. Mg(2+) is bound at residue N227. The linker stretch occupies residues 230 to 250; that stretch reads VALATAETVMRQRITQKHMVN. Residues 251–460 are N-acetyltransferase; the sequence is GVTFHNPETV…RLAHHPSRSK (210 aa). UDP-N-acetyl-alpha-D-glucosamine-binding residues include R332 and K350. Residue H362 is the Proton acceptor of the active site. 2 residues coordinate UDP-N-acetyl-alpha-D-glucosamine: Y365 and N376. Residues A379, 385–386, S404, A422, and R439 each bind acetyl-CoA; that span reads NY.

In the N-terminal section; belongs to the N-acetylglucosamine-1-phosphate uridyltransferase family. It in the C-terminal section; belongs to the transferase hexapeptide repeat family. In terms of assembly, homotrimer. Requires Mg(2+) as cofactor.

The protein localises to the cytoplasm. It carries out the reaction alpha-D-glucosamine 1-phosphate + acetyl-CoA = N-acetyl-alpha-D-glucosamine 1-phosphate + CoA + H(+). The enzyme catalyses N-acetyl-alpha-D-glucosamine 1-phosphate + UTP + H(+) = UDP-N-acetyl-alpha-D-glucosamine + diphosphate. The protein operates within nucleotide-sugar biosynthesis; UDP-N-acetyl-alpha-D-glucosamine biosynthesis; N-acetyl-alpha-D-glucosamine 1-phosphate from alpha-D-glucosamine 6-phosphate (route II): step 2/2. It functions in the pathway nucleotide-sugar biosynthesis; UDP-N-acetyl-alpha-D-glucosamine biosynthesis; UDP-N-acetyl-alpha-D-glucosamine from N-acetyl-alpha-D-glucosamine 1-phosphate: step 1/1. It participates in bacterial outer membrane biogenesis; LPS lipid A biosynthesis. Functionally, catalyzes the last two sequential reactions in the de novo biosynthetic pathway for UDP-N-acetylglucosamine (UDP-GlcNAc). The C-terminal domain catalyzes the transfer of acetyl group from acetyl coenzyme A to glucosamine-1-phosphate (GlcN-1-P) to produce N-acetylglucosamine-1-phosphate (GlcNAc-1-P), which is converted into UDP-GlcNAc by the transfer of uridine 5-monophosphate (from uridine 5-triphosphate), a reaction catalyzed by the N-terminal domain. The sequence is that of Bifunctional protein GlmU from Streptococcus pyogenes serotype M3 (strain ATCC BAA-595 / MGAS315).